The primary structure comprises 236 residues: Large ribosomal subunit protein uL3 (236 aa).

Belongs to the universal ribosomal protein uL3 family. Part of the 50S ribosomal subunit. Forms a cluster with proteins L14 and L19.

In terms of biological role, one of the primary rRNA binding proteins, it binds directly near the 3'-end of the 23S rRNA, where it nucleates assembly of the 50S subunit. The protein is Large ribosomal subunit protein uL3 of Anaeromyxobacter dehalogenans (strain 2CP-C).